A 316-amino-acid chain; its full sequence is ATP synthase gamma chain (316 aa).

It belongs to the ATPase gamma chain family. In terms of assembly, F-type ATPases have 2 components, CF(1) - the catalytic core - and CF(0) - the membrane proton channel. CF(1) has five subunits: alpha(3), beta(3), gamma(1), delta(1), epsilon(1). CF(0) has three main subunits: a, b and c.

The protein resides in the cellular thylakoid membrane. Its function is as follows. Produces ATP from ADP in the presence of a proton gradient across the membrane. The gamma chain is believed to be important in regulating ATPase activity and the flow of protons through the CF(0) complex. This Prochlorococcus marinus (strain SARG / CCMP1375 / SS120) protein is ATP synthase gamma chain.